Here is a 359-residue protein sequence, read N- to C-terminus: Putative X-Core fused protein (359 aa).

2 disordered regions span residues 25 to 48 (SRGRPVSRPFGPHPSPSSSAVPAD) and 312 to 359 (NAPI…ESQC). Over residues 325-352 (VRRRGRSPRRRTPSPRRRRSESPRRRRS) the composition is skewed to basic residues.

This chain is Putative X-Core fused protein, found in Homo sapiens (Human).